The sequence spans 314 residues: MKGPGFHFDVHTDLRADQKAEVLIEALPWLEEFAGQRIVVKYGGNAMVDDHLKQCFAEDMVFLRQVGLHPIVVHGGGPQISHMLKALGIKSEFKGGLRVTTPEAMDVVRMVLTGKVSRELVGLINAHGPLAVGLSGEDGGLFSAMQRRPIINGKPTDIGLVGDVVSVDASAVEDLVAAGRIPVVSSVAPNEEDATEVLNVNADSAAAALAAAVGAHKLVILTDVDGLYADWPDKNSLIGRIGVETLRDMLPDLESGMRPKMEACVRAIDGGVPQAHIIDGRKPHSILNEIFTSAGIGTMVMPDEGLEMRSSYGY.

Residues 76-77 (GG), Arg98, and Asn199 each bind substrate.

It belongs to the acetylglutamate kinase family. ArgB subfamily.

Its subcellular location is the cytoplasm. It catalyses the reaction N-acetyl-L-glutamate + ATP = N-acetyl-L-glutamyl 5-phosphate + ADP. It functions in the pathway amino-acid biosynthesis; L-arginine biosynthesis; N(2)-acetyl-L-ornithine from L-glutamate: step 2/4. In terms of biological role, catalyzes the ATP-dependent phosphorylation of N-acetyl-L-glutamate. This is Acetylglutamate kinase from Bifidobacterium longum (strain DJO10A).